We begin with the raw amino-acid sequence, 501 residues long: MNFHVTSGTPEKQRTAALVVGIYEDEKLSSYAQRIDKASEGYVSRLIKQGDFTGKKGQALLLFALPGVKAERVLLMGCGQKDKVTAKNLRQSWSGAVKALQACGATEAMICPLEAKPKDEELTQWARLIVETAEQALYRYEHTKSKKESLKKPLAKLTLLLDQRSQQPLAEQGIQQGQAIAKGVNLARDLGNLPGNICTPTYLADEARRLAKEYKSLKAKILEQAEMEKLGLGALLAVSRGSRQPPKLITLEYKGAPGKQKPIVLVGKGLTFDAGGISIKPGERMDEMKYDMCGGAGVLGTMQACAELELPLNVIAVVPSSENLPDGAANKPGDVLTSLSGQTIEVLNTDAEGRLILCDALTYSKRYRPDVVIDVATLTGACVIALGAHASGLLSNDQSLAEHLLAAGQTSDDRAWQLPLWDDYQQQLDSNFADMANIGGRGAGTITAACFLARFTEEFRWAHLDIAGTAWLSGKEKGATGRPVPLLTQYLIQRAQEAKTS.

2 residues coordinate Mn(2+): Lys268 and Asp273. Residue Lys280 is part of the active site. Residues Asp291, Asp350, and Glu352 each coordinate Mn(2+). Residue Arg354 is part of the active site.

This sequence belongs to the peptidase M17 family. Mn(2+) is required as a cofactor.

It is found in the cytoplasm. The enzyme catalyses Release of an N-terminal amino acid, Xaa-|-Yaa-, in which Xaa is preferably Leu, but may be other amino acids including Pro although not Arg or Lys, and Yaa may be Pro. Amino acid amides and methyl esters are also readily hydrolyzed, but rates on arylamides are exceedingly low.. It catalyses the reaction Release of an N-terminal amino acid, preferentially leucine, but not glutamic or aspartic acids.. Functionally, presumably involved in the processing and regular turnover of intracellular proteins. Catalyzes the removal of unsubstituted N-terminal amino acids from various peptides. This chain is Probable cytosol aminopeptidase, found in Nitrosococcus oceani (strain ATCC 19707 / BCRC 17464 / JCM 30415 / NCIMB 11848 / C-107).